A 1098-amino-acid chain; its full sequence is Ran-binding protein 16 (1098 aa).

The protein belongs to the exportin family. In terms of assembly, binds to nucleoporins and the GTP-bound form of Ran.

The protein resides in the cytoplasm. It is found in the nucleus. Its function is as follows. May function as a nuclear transport receptor. The sequence is that of Ran-binding protein 16 (Ranbp16) from Drosophila melanogaster (Fruit fly).